A 242-amino-acid chain; its full sequence is 1-(5-phosphoribosyl)-5-[(5-phosphoribosylamino)methylideneamino] imidazole-4-carboxamide isomerase (242 aa).

Aspartate 10 acts as the Proton acceptor in catalysis. Residue aspartate 132 is the Proton donor of the active site.

It belongs to the HisA/HisF family.

It localises to the cytoplasm. The enzyme catalyses 1-(5-phospho-beta-D-ribosyl)-5-[(5-phospho-beta-D-ribosylamino)methylideneamino]imidazole-4-carboxamide = 5-[(5-phospho-1-deoxy-D-ribulos-1-ylimino)methylamino]-1-(5-phospho-beta-D-ribosyl)imidazole-4-carboxamide. Its pathway is amino-acid biosynthesis; L-histidine biosynthesis; L-histidine from 5-phospho-alpha-D-ribose 1-diphosphate: step 4/9. The protein is 1-(5-phosphoribosyl)-5-[(5-phosphoribosylamino)methylideneamino] imidazole-4-carboxamide isomerase of Methanothrix thermoacetophila (strain DSM 6194 / JCM 14653 / NBRC 101360 / PT) (Methanosaeta thermophila).